The sequence spans 652 residues: Acetyl-coenzyme A synthetase (652 aa).

Residues 191 to 194 (RAGR), threonine 311, and asparagine 335 each bind CoA. ATP contacts are provided by residues 387-389 (GEP), 411-416 (DTWWQT), aspartate 500, and arginine 515. Serine 523 provides a ligand contact to CoA. Position 526 (arginine 526) interacts with ATP. 3 residues coordinate Mg(2+): valine 537, histidine 539, and isoleucine 542. Residue arginine 584 coordinates CoA. Lysine 609 carries the post-translational modification N6-acetyllysine; by autocatalysis.

This sequence belongs to the ATP-dependent AMP-binding enzyme family. In terms of assembly, forms a 1:1 complex with CobB/NAD-dependent deacetylase. The cofactor is Mg(2+). Autoacetylated. Deacetylation by CobB activates the enzyme.

The catalysed reaction is acetate + ATP + CoA = acetyl-CoA + AMP + diphosphate. Its function is as follows. Catalyzes the conversion of acetate into acetyl-CoA (AcCoA), an essential intermediate at the junction of anabolic and catabolic pathways. Acs undergoes a two-step reaction. In the first half reaction, Acs combines acetate with ATP to form acetyl-adenylate (AcAMP) intermediate. In the second half reaction, it can then transfer the acetyl group from AcAMP to the sulfhydryl group of CoA, forming the product AcCoA. Enables the cell to use acetate during aerobic growth to generate energy via the TCA cycle, and biosynthetic compounds via the glyoxylate shunt. Acetylates CheY, the response regulator involved in flagellar movement and chemotaxis. This is Acetyl-coenzyme A synthetase from Escherichia coli (strain K12).